Consider the following 291-residue polypeptide: Transmembrane O-methyltransferase (291 aa).

Residues valine 31–valine 51 traverse the membrane as a helical segment. S-adenosyl-L-methionine is bound by residues glutamate 137, glycine 139–threonine 140, serine 145, glutamate 163, and serine 193.

It belongs to the class I-like SAM-binding methyltransferase superfamily. Cation-dependent O-methyltransferase family. In terms of assembly, interacts with LHFPL5, PCDH15, TMC1, TMC2 and TMIE. Interacts directly with TMC1. The interaction of TOMT with TMC1 and TMC2 is required for the transportation of TMC1/2 into the stereocilia of hair cells.

The protein localises to the membrane. It localises to the cytoplasm. Its subcellular location is the endoplasmic reticulum. It catalyses the reaction a catechol + S-adenosyl-L-methionine = a guaiacol + S-adenosyl-L-homocysteine + H(+). Its function is as follows. Catalyzes the O-methylation, and thereby the inactivation, of catecholamine neurotransmitters and catechol hormones. Required for auditory function. Component of the cochlear hair cell's mechanotransduction (MET) machinery. Involved in the assembly of the asymmetric tip-link MET complex. Required for transportation of TMC1 and TMC2 proteins into the mechanically sensitive stereocilia of the hair cells. The function in MET is independent of the enzymatic activity. This is Transmembrane O-methyltransferase from Homo sapiens (Human).